Reading from the N-terminus, the 308-residue chain is Maspardin (308 aa).

Positions 87–159 (FCDGFRKLLD…NSFWLMPAFM (73 aa)) constitute an AB hydrolase-1 domain. Ser-304 is modified (phosphoserine).

It belongs to the AB hydrolase superfamily. As to quaternary structure, interacts with CD4. Interacts with ALDH16A1. As to expression, expressed in all tissues tested, including heart, brain, placenta, lung, liver, skeletal muscle, kidney and pancreas. Expressed in J.CaM1.6, HuT 78 and HeLa cell lines (at protein level).

It localises to the cytoplasm. It is found in the cytosol. Its subcellular location is the membrane. The protein localises to the endosome membrane. The protein resides in the golgi apparatus. It localises to the trans-Golgi network membrane. In terms of biological role, may play a role as a negative regulatory factor in CD4-dependent T-cell activation. This is Maspardin (SPG21) from Homo sapiens (Human).